The sequence spans 163 residues: Photosystem II extrinsic protein V (163 aa).

Positions 1–26 (MFKKSSQLFSLVFFTIFSIFIGTASA) are cleaved as a signal peptide. Heme c is bound by residues C63, C66, H67, and M130.

Belongs to the cytochrome c family. PsbV subfamily. As to quaternary structure, PSII is composed of 1 copy each of membrane proteins PsbA, PsbB, PsbC, PsbD, PsbE, PsbF, PsbH, PsbI, PsbJ, PsbK, PsbL, PsbM, PsbT, PsbY, PsbZ, Psb30/Ycf12, at least 3 peripheral proteins of the oxygen-evolving complex and a large number of cofactors. It forms dimeric complexes. It depends on heme c as a cofactor.

Its subcellular location is the plastid. The protein localises to the chloroplast thylakoid membrane. In terms of biological role, one of the extrinsic, lumenal subunits of photosystem II (PSII). PSII is a light-driven water plastoquinone oxidoreductase, using light energy to abstract electrons from H(2)O, generating a proton gradient subsequently used for ATP formation. The extrinsic proteins stabilize the structure of photosystem II oxygen-evolving complex (OEC), the ion environment of oxygen evolution and protect the OEC against heat-induced inactivation. In Phaeodactylum tricornutum (strain CCAP 1055/1), this protein is Photosystem II extrinsic protein V.